Consider the following 432-residue polypeptide: Enolase (432 aa).

Gln-167 contributes to the (2R)-2-phosphoglycerate binding site. The Proton donor role is filled by Glu-209. Positions 246, 290, and 317 each coordinate Mg(2+). Residues Lys-342, Arg-371, Ser-372, and Lys-393 each contribute to the (2R)-2-phosphoglycerate site. The active-site Proton acceptor is Lys-342.

The protein belongs to the enolase family. In terms of assembly, component of the RNA degradosome, a multiprotein complex involved in RNA processing and mRNA degradation. The cofactor is Mg(2+).

Its subcellular location is the cytoplasm. It localises to the secreted. It is found in the cell surface. The catalysed reaction is (2R)-2-phosphoglycerate = phosphoenolpyruvate + H2O. It participates in carbohydrate degradation; glycolysis; pyruvate from D-glyceraldehyde 3-phosphate: step 4/5. Functionally, catalyzes the reversible conversion of 2-phosphoglycerate (2-PG) into phosphoenolpyruvate (PEP). It is essential for the degradation of carbohydrates via glycolysis. The chain is Enolase from Cronobacter sakazakii (strain ATCC BAA-894) (Enterobacter sakazakii).